A 221-amino-acid chain; its full sequence is MNEEKAVVVFSGGQDSTTCLFWAKKQFAEVEAVTFDYGQRHRREIEVAASIADELGVRHTVLDMSLLGQLAPNALTRGEIAIEQKEGELPTTFVDGRNLLFLSFAAVLAKQRGARHIVTGVCETDFSGYPDCRDIFIKSLNVTLNLAMDYPFVIHTPLMWLTKAETWKLADELGALEFVRTKTLTCYNGVIADGCGECPACVLRKRGLEEYLQEKAGVKAR.

Position 10 to 20 (10 to 20 (FSGGQDSTTCL)) interacts with ATP. Zn(2+) contacts are provided by cysteine 186, cysteine 195, cysteine 198, and cysteine 201.

It belongs to the QueC family. Homodimer. Requires Zn(2+) as cofactor.

The enzyme catalyses 7-carboxy-7-deazaguanine + NH4(+) + ATP = 7-cyano-7-deazaguanine + ADP + phosphate + H2O + H(+). Its pathway is purine metabolism; 7-cyano-7-deazaguanine biosynthesis. Its function is as follows. Catalyzes the ATP-dependent conversion of 7-carboxy-7-deazaguanine (CDG) to 7-cyano-7-deazaguanine (preQ(0)). This chain is 7-cyano-7-deazaguanine synthase, found in Geobacillus thermodenitrificans (strain NG80-2).